A 225-amino-acid polypeptide reads, in one-letter code: MKESDEKAEKINKYIEMLINYPVNLTAYTTKKDAYENLILDSLIPIEAEDTFLNSKNIVDIGTGGGIPGLVWAIYFPEKEFYLVDSVSKKIEALKIFIKELKITNVYLFCERAEDFAKTHRDYFDFATCKALARSDIALEYLSPLVKVNSYISLFKGPSYYTNEMKYTQNVLKKLNIAEFKEIDYEIGEDKKKRYMILFKKIGITPQNFPRQVGIPKKFPLGEIK.

S-adenosyl-L-methionine contacts are provided by residues G62, 113–114 (AE), and K130.

The protein belongs to the methyltransferase superfamily. RNA methyltransferase RsmG family.

Its subcellular location is the cytoplasm. Its function is as follows. Specifically methylates the N7 position of a guanine in 16S rRNA. This is Ribosomal RNA small subunit methyltransferase G from Petrotoga mobilis (strain DSM 10674 / SJ95).